The sequence spans 398 residues: MIGFLIMLVSLLFVLSVVVTVHELGHYWAARACGVAIERFSIGFGAPLISWRDKRGVEWCVASIPLGGYVRFAGDENAASVPDQNDLDAMRNEIRRREGDDAVNRYFHFKPVWQRAFIAVAGPMANFILAILVFAVILVSFGAQKTSTTVGEVVAGTPAAAAGFKPGDVILKADNRQIRSFQDIQGYVALRANMPIDFAVERDGRTVHLTATPRLVERQNEISGRVKVGELGLRSAPGGRFERSSLLSAIPDATVEVWDMIKTIAFYLGRLLMGQLPADQISGIIGIGHTAGAVTNGVVEQAPNGKALAIGLIYSQFWLIASLSVSIGFMNLLPIPVLDGGHLVMYAYEAVAKRPLRAEFQAAGFRAGLALILGFMLFAAWNDLNRYDVFKFIGGLFT.

Histidine 22 provides a ligand contact to Zn(2+). Residue glutamate 23 is part of the active site. Residue histidine 26 participates in Zn(2+) binding. Helical transmembrane passes span 117–139, 316–338, and 362–381; these read FIAV…VILV, QFWL…IPVL, and AAGF…FAAW. One can recognise a PDZ domain in the interval 130–203; sequence AILVFAVILV…MPIDFAVERD (74 aa).

It belongs to the peptidase M50B family. Zn(2+) serves as cofactor.

It is found in the cell inner membrane. Functionally, involved in the regulated intramembrane proteolysis (RIP) of the short isoform of PodJ protein (PodJS), during the swarmer-to-stalked transition. The cleavage occurs near or within the single transmembrane of PodJS thereby releasing the N-terminal segment into the cytoplasm for subsequent degradation. It contributes to preserve asymmetry in the next cell cycle through sequential degradation. The chain is Metalloprotease MmpA (mmpA) from Caulobacter vibrioides (strain ATCC 19089 / CIP 103742 / CB 15) (Caulobacter crescentus).